We begin with the raw amino-acid sequence, 764 residues long: Thyrotropin receptor (764 aa).

An N-terminal signal peptide occupies residues 1–21 (MRPTPLLRLALLLVLPSSLWG). At 22 to 413 (ERCPSPPCEC…EFNPCEDIMG (392 aa)) the chain is on the extracellular side. A disulfide bridge links C31 with C41. Residues 51–74 (PPSTQTLKFIETHLKTIPSRAFSN) form an LRR 1 repeat. Residues N77 and N99 are each glycosylated (N-linked (GlcNAc...) asparagine). LRR repeat units lie at residues 125–150 (LPLLKFLGIFNTGLRVFPDLTKIYST), 152–174 (VFFILEITDNPYMTSVPANAFQG), 176–199 (SNETLTLKLYNNGFTSIQGHAFNG), 201–223 (KLDAVYLNKNKYLTVIDQDAFAG), and 225–248 (YSGPTLLDISYTSVTALPSKGLEH). N-linked (GlcNAc...) asparagine glycans are attached at residues N177 and N198. N302 carries an N-linked (GlcNAc...) asparagine glycan. Position 385 is a sulfotyrosine (Y385). Residues 414 to 441 (YKFLRIVVWFVSLLALLGNVFVLVILLT) traverse the membrane as a helical segment. The Cytoplasmic portion of the chain corresponds to 442–450 (SHYKLTVPR). Residues 451-473 (FLMCNLAFADFCMGLYLLLIASV) traverse the membrane as a helical segment. At 474-494 (DLYTQSEYYNHAIDWQTGPGC) the chain is on the extracellular side. Residues C494 and C569 are joined by a disulfide bond. A helical membrane pass occupies residues 495–517 (NTAGFFTVFASELSVYTLTVITL). At 518-537 (ERWYAITFAMHLDRKIRLWH) the chain is on the cytoplasmic side. Residues 538–560 (AYVIMLGGWVCCFLLALLPLVGI) form a helical membrane-spanning segment. Residues 561 to 580 (SSYAKVSICLPMDTETPLAL) lie on the Extracellular side of the membrane. A helical membrane pass occupies residues 581–602 (AYIILVLLLNIIAFIIVCACYV). At 603–625 (KIYITVRNPHYNPGDKDTRIAKR) the chain is on the cytoplasmic side. The helical transmembrane segment at 626–649 (MAVLIFTDFMCMAPISFYALSALM) threads the bilayer. The Extracellular portion of the chain corresponds to 650–660 (NKPLITVTNSK). The chain crosses the membrane as a helical span at residues 661-682 (ILLVLFYPLNSCANPFLYAIFT). The Cytoplasmic segment spans residues 683 to 764 (KAFQRDVFML…TSKEYKQTVL (82 aa)). The short motif at 762–764 (TVL) is the PDZ-binding element.

Belongs to the G-protein coupled receptor 1 family. FSH/LSH/TSH subfamily. Interacts with heterodimer GPHA2:GPHB5; this interaction stimulates cAMP production. Interacts (via the PDZ-binding motif) with SCRIB; regulates TSHR trafficking and function. Glycosylated. In terms of processing, sulfated. Sulfation on Tyr-385 plays a role in thyrotropin receptor binding and activation.

It localises to the cell membrane. Its subcellular location is the basolateral cell membrane. Functionally, receptor for the thyroid-stimulating hormone (TSH) or thyrotropin. Also acts as a receptor for the heterodimeric glycoprotein hormone (GPHA2:GPHB5) or thyrostimulin. The activity of this receptor is mediated by G proteins which activate adenylate cyclase. Plays a central role in controlling thyroid cell metabolism. In Ovis aries (Sheep), this protein is Thyrotropin receptor (TSHR).